A 255-amino-acid polypeptide reads, in one-letter code: Imidazole glycerol phosphate synthase subunit HisF (255 aa).

Catalysis depends on residues Asp11 and Asp130.

It belongs to the HisA/HisF family. In terms of assembly, heterodimer of HisH and HisF.

It localises to the cytoplasm. The catalysed reaction is 5-[(5-phospho-1-deoxy-D-ribulos-1-ylimino)methylamino]-1-(5-phospho-beta-D-ribosyl)imidazole-4-carboxamide + L-glutamine = D-erythro-1-(imidazol-4-yl)glycerol 3-phosphate + 5-amino-1-(5-phospho-beta-D-ribosyl)imidazole-4-carboxamide + L-glutamate + H(+). It functions in the pathway amino-acid biosynthesis; L-histidine biosynthesis; L-histidine from 5-phospho-alpha-D-ribose 1-diphosphate: step 5/9. Its function is as follows. IGPS catalyzes the conversion of PRFAR and glutamine to IGP, AICAR and glutamate. The HisF subunit catalyzes the cyclization activity that produces IGP and AICAR from PRFAR using the ammonia provided by the HisH subunit. The polypeptide is Imidazole glycerol phosphate synthase subunit HisF (Rhodopseudomonas palustris (strain BisA53)).